The sequence spans 286 residues: Bifunctional protein FolD (286 aa).

Residues 170-172 and I236 each bind NADP(+); that span reads GHS.

Belongs to the tetrahydrofolate dehydrogenase/cyclohydrolase family. Homodimer.

It carries out the reaction (6R)-5,10-methylene-5,6,7,8-tetrahydrofolate + NADP(+) = (6R)-5,10-methenyltetrahydrofolate + NADPH. It catalyses the reaction (6R)-5,10-methenyltetrahydrofolate + H2O = (6R)-10-formyltetrahydrofolate + H(+). It participates in one-carbon metabolism; tetrahydrofolate interconversion. In terms of biological role, catalyzes the oxidation of 5,10-methylenetetrahydrofolate to 5,10-methenyltetrahydrofolate and then the hydrolysis of 5,10-methenyltetrahydrofolate to 10-formyltetrahydrofolate. This is Bifunctional protein FolD from Methanococcoides burtonii (strain DSM 6242 / NBRC 107633 / OCM 468 / ACE-M).